A 216-amino-acid chain; its full sequence is Large ribosomal subunit protein uL24m (216 aa).

Residues 1-9 constitute a mitochondrion transit peptide; the sequence is MRLSALLAL. Ser-24 carries the post-translational modification Phosphoserine. The KOW domain occupies 56–89; that stretch reads LFCGDRVEILEGKDAGKQGKVVQVIRQRNWVVVE.

It belongs to the universal ribosomal protein uL24 family. In terms of assembly, component of the mitochondrial ribosome large subunit (39S) which comprises a 16S rRNA and about 50 distinct proteins.

The protein localises to the mitochondrion. The chain is Large ribosomal subunit protein uL24m (MRPL24) from Bos taurus (Bovine).